We begin with the raw amino-acid sequence, 873 residues long: Probable beta-glucosidase A (873 aa).

An N-terminal signal peptide occupies residues 1–19; sequence MRFGWLEVAALTAASVANA. Residues asparagine 71, asparagine 222, and asparagine 263 are each glycosylated (N-linked (GlcNAc...) asparagine). Aspartate 291 is a catalytic residue. N-linked (GlcNAc...) asparagine glycosylation is found at asparagine 326, asparagine 333, asparagine 365, asparagine 453, asparagine 534, asparagine 553, asparagine 575, asparagine 679, and asparagine 725. Residues 730–765 form a disordered region; the sequence is EDSSDDPNYGWEDSEYIPEGARDGSPQPLLKAGGAP.

The protein belongs to the glycosyl hydrolase 3 family.

Its subcellular location is the secreted. The catalysed reaction is Hydrolysis of terminal, non-reducing beta-D-glucosyl residues with release of beta-D-glucose.. The protein operates within glycan metabolism; cellulose degradation. In terms of biological role, beta-glucosidases are one of a number of cellulolytic enzymes involved in the degradation of cellulosic biomass. Catalyzes the last step releasing glucose from the inhibitory cellobiose. The chain is Probable beta-glucosidase A (bglA) from Neosartorya fischeri (strain ATCC 1020 / DSM 3700 / CBS 544.65 / FGSC A1164 / JCM 1740 / NRRL 181 / WB 181) (Aspergillus fischerianus).